A 338-amino-acid polypeptide reads, in one-letter code: Thiosulfate-binding protein (338 aa).

The signal sequence occupies residues 1-25 (MAVNLLKKNSLALVASLLLAGHVQA).

It belongs to the prokaryotic sulfate-binding protein family. The complex is composed of two ATP-binding proteins (CysA), two transmembrane proteins (CysT and CysW) and a solute-binding protein (CysP).

It is found in the periplasm. Functionally, part of the ABC transporter complex CysAWTP (TC 3.A.1.6.1) involved in sulfate/thiosulfate import. This protein specifically binds thiosulfate and is involved in its transmembrane transport. This is Thiosulfate-binding protein (cysP) from Escherichia coli (strain K12).